The primary structure comprises 437 residues: La-related protein 7 homolog (437 aa).

The HTH La-type RNA-binding domain maps to 38 to 145 (SKSPSLTIPK…KRKKKFDNRT (108 aa)). A xRRM domain is found at 279–397 (ELSQSCFLKI…QRSSIDEIKA (119 aa)). The span at 417-427 (RRPVSKRKNKA) shows a compositional bias: basic residues. A disordered region spans residues 417–437 (RRPVSKRKNKAINKMSTEVKK).

This sequence belongs to the LARP7 family. Component of the telomerase holoenzyme complex composed minimally of the catalytic subunit p123 and the telomerase RNA template component. The mature form of the protein is a protein of 43 kDa, which is derived from a 51 kDa precursor by proteolytic cleavage.

The protein localises to the nucleus. It localises to the chromosome. Its subcellular location is the telomere. In terms of biological role, RNA-binding protein required for assembly of the holoenzyme telomerase ribonucleoprotein (RNP) complex. Specifically binds telomerase RNA and promotes its assembly with catalytic subunit p123, thereby stimulating enzymatic activity and processivity of p123. Telomerase is a ribonucleoprotein enzyme essential that copies new telomeric repeats onto chromosome ends and functions to maintain cell division. The sequence is that of La-related protein 7 homolog from Euplotes aediculatus (Ciliate).